We begin with the raw amino-acid sequence, 400 residues long: NADPH dehydrogenase 1 (400 aa).

2 residues coordinate FMN: threonine 38 and glutamine 115. Substrate is bound by residues histidine 192 and asparagine 195. Tyrosine 197 serves as the catalytic Proton donor. Arginine 244 and arginine 349 together coordinate FMN. Tyrosine 376 provides a ligand contact to substrate.

As to quaternary structure, homodimer or heterodimer. It depends on FMN as a cofactor.

It carries out the reaction A + NADPH + H(+) = AH2 + NADP(+). Flavin-dependent enoate reductase that catalyzes the chemo- and stereoslective hydrogenation of electron-poor alkenes. The enzyme is reduced by NADPH, and oxygen, quinones, and alpha,beta-unsaturated aldehydes and ketones can act as electron acceptors to complete catalytic turnover. The physiological oxidant remains elusive. This chain is NADPH dehydrogenase 1, found in Saccharomyces pastorianus (Lager yeast).